The following is a 319-amino-acid chain: MDQLVPAERYSPYRFFSAEDWAKFRADTPLTLTEDEVRRLRSLNDPVNLEEVRRIYLSMSRLLSAHVEASQLLFQQRQVFFDSDHAVKTPFIIGIAGSVAVGKSTTARVLKELLTRWPSSPKVDLITTDGFLLPNAVLSHEGLMERKGFPESYDVGAILRFLSGIKAGLPNMRAPIYSHLTYDVVPGEFAVIDRPDILIFEGINVLQTRDLPRDGKAVPFVSDFFDFSIYIDAPEELIHEWYVDRFMRLRETAFRDPNSFFHRYSTLPEVEARTIAEELWTNINLKNLRENILPTRPRADLILRKGTNHLVQEVALRKL.

97-104 (GSVAVGKS) is an ATP binding site.

The protein belongs to the prokaryotic pantothenate kinase family.

The protein localises to the cytoplasm. The enzyme catalyses (R)-pantothenate + ATP = (R)-4'-phosphopantothenate + ADP + H(+). Its pathway is cofactor biosynthesis; coenzyme A biosynthesis; CoA from (R)-pantothenate: step 1/5. In Chelativorans sp. (strain BNC1), this protein is Pantothenate kinase.